We begin with the raw amino-acid sequence, 345 residues long: L-threonine 3-dehydrogenase (345 aa).

Cysteine 42 is a Zn(2+) binding site. Residues threonine 44 and histidine 47 each act as charge relay system in the active site. The Zn(2+) site is built by histidine 67, glutamate 68, cysteine 97, cysteine 100, cysteine 103, and cysteine 111. NAD(+) contacts are provided by residues isoleucine 179, aspartate 199, arginine 204, 266 to 268 (LGI), and 290 to 291 (IY).

Belongs to the zinc-containing alcohol dehydrogenase family. As to quaternary structure, homotetramer. It depends on Zn(2+) as a cofactor.

The protein resides in the cytoplasm. It carries out the reaction L-threonine + NAD(+) = (2S)-2-amino-3-oxobutanoate + NADH + H(+). The protein operates within amino-acid degradation; L-threonine degradation via oxydo-reductase pathway; glycine from L-threonine: step 1/2. Functionally, catalyzes the NAD(+)-dependent oxidation of L-threonine to 2-amino-3-ketobutyrate. The protein is L-threonine 3-dehydrogenase of Rhizobium etli (strain CIAT 652).